The sequence spans 422 residues: m7GpppN-mRNA hydrolase (422 aa).

The 132-residue stretch at 95–226 (MGVPTYGAII…KLGLAPNKFF (132 aa)) folds into the Nudix hydrolase domain. A Nudix box motif is present at residues 129–150 (GKVNKEEAPHDCAAREVFEETG). Positions 144 and 148 each coordinate Mn(2+). Phosphoserine is present on residues serine 246, serine 247, serine 249, serine 276, and serine 284. Residues 247–347 (SDSDNGFSSA…GVHGQPAKQQ (101 aa)) are disordered. Low complexity predominate over residues 249–258 (SDNGFSSAGS). The segment covering 303–312 (NHGEVSDLLK) has biased composition (basic and acidic residues).

The protein belongs to the Nudix hydrolase family. DCP2 subfamily. Found in a mRNA decay complex with LSM1, LSM3, LSM4, EXOSC2, EXOSC4, EXOSC10, PARN, XRN1, CNOT6, UPF1, UPF2 and UPF3B. Forms a complex with DCP1A, EDC3, DDX6 and EDC4/HEDLS, within this complex directly interacts with EDC4/HEDLS. Interacts with DPC1B, UPF1, UPF2 and UPF3B. Associates with polysomes. Interacts (via N-terminus and C-terminus) with TRIM21 (via N-terminus and C-terminus). Interacts with LIMD1, WTIP and AJUBA. Interacts with DDX17 in an RNA-dependent manner. Interacts with ZC3HAV1. Interacts with APOBEC3G in an RNA-dependent manner. Interacts with ZFP36L1 (via N-terminus). Interacts with NBDY. It depends on Mn(2+) as a cofactor. Mg(2+) serves as cofactor. Strongly expressed in brain and testis. Weakly expressed in lung. Not detected in heart, liver, kidney and muscle (at protein level).

It localises to the cytoplasm. Its subcellular location is the P-body. The protein localises to the nucleus. It catalyses the reaction a 5'-end (N(7)-methyl 5'-triphosphoguanosine)-ribonucleoside in mRNA + H2O = N(7)-methyl-GDP + a 5'-end phospho-ribonucleoside in mRNA + 2 H(+). Its function is as follows. Decapping metalloenzyme that catalyzes the cleavage of the cap structure on mRNAs. Removes the 7-methyl guanine cap structure from mRNA molecules, yielding a 5'-phosphorylated mRNA fragment and 7m-GDP. Necessary for the degradation of mRNAs, both in normal mRNA turnover and in nonsense-mediated mRNA decay. Plays a role in replication-dependent histone mRNA degradation. Has higher activity towards mRNAs that lack a poly(A) tail. Has no activity towards a cap structure lacking an RNA moiety. The presence of a N(6)-methyladenosine methylation at the second transcribed position of mRNAs (N(6),2'-O-dimethyladenosine cap; m6A(m)) provides resistance to DCP2-mediated decapping. Blocks autophagy in nutrient-rich conditions by repressing the expression of ATG-related genes through degradation of their transcripts. This chain is m7GpppN-mRNA hydrolase (Dcp2), found in Mus musculus (Mouse).